The primary structure comprises 329 residues: D-alanine--D-alanine ligase (329 aa).

An ATP-grasp domain is found at 120 to 326 (KLWLSAIGIP…FADYLEQILR (207 aa)). 150–205 (ALAKWGKVFIKAASQGSSVGCYSASNEADLVKGIADAFGYSEQVLIEKAVKPRELE) lines the ATP pocket. Asp280, Glu293, and Asn295 together coordinate Mg(2+).

It belongs to the D-alanine--D-alanine ligase family. The cofactor is Mg(2+). Requires Mn(2+) as cofactor.

It localises to the cytoplasm. It carries out the reaction 2 D-alanine + ATP = D-alanyl-D-alanine + ADP + phosphate + H(+). It functions in the pathway cell wall biogenesis; peptidoglycan biosynthesis. Functionally, cell wall formation. The sequence is that of D-alanine--D-alanine ligase from Aeromonas hydrophila subsp. hydrophila (strain ATCC 7966 / DSM 30187 / BCRC 13018 / CCUG 14551 / JCM 1027 / KCTC 2358 / NCIMB 9240 / NCTC 8049).